Reading from the N-terminus, the 494-residue chain is Aspartyl/glutamyl-tRNA(Asn/Gln) amidotransferase subunit B (494 aa).

This sequence belongs to the GatB/GatE family. GatB subfamily. Heterotrimer of A, B and C subunits.

The enzyme catalyses L-glutamyl-tRNA(Gln) + L-glutamine + ATP + H2O = L-glutaminyl-tRNA(Gln) + L-glutamate + ADP + phosphate + H(+). The catalysed reaction is L-aspartyl-tRNA(Asn) + L-glutamine + ATP + H2O = L-asparaginyl-tRNA(Asn) + L-glutamate + ADP + phosphate + 2 H(+). In terms of biological role, allows the formation of correctly charged Asn-tRNA(Asn) or Gln-tRNA(Gln) through the transamidation of misacylated Asp-tRNA(Asn) or Glu-tRNA(Gln) in organisms which lack either or both of asparaginyl-tRNA or glutaminyl-tRNA synthetases. The reaction takes place in the presence of glutamine and ATP through an activated phospho-Asp-tRNA(Asn) or phospho-Glu-tRNA(Gln). This Rhizorhabdus wittichii (strain DSM 6014 / CCUG 31198 / JCM 15750 / NBRC 105917 / EY 4224 / RW1) (Sphingomonas wittichii) protein is Aspartyl/glutamyl-tRNA(Asn/Gln) amidotransferase subunit B.